Here is a 489-residue protein sequence, read N- to C-terminus: Cytochrome P450 monooxygenase tazI (489 aa).

Position 433 (cysteine 433) interacts with heme.

It belongs to the cytochrome P450 family. Heme is required as a cofactor.

The protein operates within secondary metabolite biosynthesis. Its function is as follows. Cytochrome P450 monooxygenase; part of the gene cluster that mediates the biosynthesis of azaterrilone A and other azaphilones, a class of fungal metabolites characterized by a highly oxygenated pyrano-quinone bicyclic core and exhibiting a broad range of bioactivities. The first step of the pathway begins with the non-reducing polyketide synthase tazA that assembles one acetyl-CoA starter unit, five malonyl-CoA units, and catalyzes a series of Claisen condensations, methylation, PT-mediated cyclization, and finally releases the first hexaketide precursor through the R-domain. The tazA product then undergoes reduction on its terminal ketone and the following pyran-ring formation by yet undetermined enzyme(s). Dehydration and enoyl reduction, possibly involving the trans-enoyl reductase tazE leads to the next intermediate. TazD is predicted as an acetyltransferase and might catalyze the acetylation steps leading to the synthesis of azaterrilone A. Azaterrilone A is not the final product of the taz pathway and both the highly reducing polyketide synthase tazB and the dual enzyme tazHJ catalyze late steps of the pathway, leading to the production of the 2 final stereoisomers that contain additional polyketide modification whose structures have still to be determined. This Aspergillus terreus (strain NIH 2624 / FGSC A1156) protein is Cytochrome P450 monooxygenase tazI.